A 566-amino-acid chain; its full sequence is NAD-dependent malic enzyme (566 aa).

Tyr104 (proton donor) is an active-site residue. Residue Arg157 coordinates NAD(+). The Proton acceptor role is filled by Lys175. Glu246, Asp247, and Asp270 together coordinate a divalent metal cation. Positions 270 and 419 each coordinate NAD(+).

The protein belongs to the malic enzymes family. As to quaternary structure, homotetramer. The cofactor is Mg(2+). Requires Mn(2+) as cofactor.

The enzyme catalyses (S)-malate + NAD(+) = pyruvate + CO2 + NADH. It carries out the reaction oxaloacetate + H(+) = pyruvate + CO2. This chain is NAD-dependent malic enzyme, found in Cronobacter sakazakii (strain ATCC BAA-894) (Enterobacter sakazakii).